Here is a 432-residue protein sequence, read N- to C-terminus: Trigger factor (432 aa).

The PPIase FKBP-type domain occupies 161–246; that stretch reads DDRVTIDFVG…LKKIENMVLP (86 aa).

The protein belongs to the FKBP-type PPIase family. Tig subfamily.

It localises to the cytoplasm. It carries out the reaction [protein]-peptidylproline (omega=180) = [protein]-peptidylproline (omega=0). Its function is as follows. Involved in protein export. Acts as a chaperone by maintaining the newly synthesized protein in an open conformation. Functions as a peptidyl-prolyl cis-trans isomerase. The sequence is that of Trigger factor (tig) from Haemophilus influenzae (strain ATCC 51907 / DSM 11121 / KW20 / Rd).